The sequence spans 197 residues: Probable GTP-binding protein EngB (197 aa).

Positions 22 to 195 (NLPEIAFVGR…VDYLFDDLVE (174 aa)) constitute an EngB-type G domain. GTP-binding positions include 30–37 (GRSNVGKS), 57–61 (GKTRL), 75–78 (DLPG), 142–145 (TKSD), and 174–176 (FSS). Ser37 and Thr59 together coordinate Mg(2+).

Belongs to the TRAFAC class TrmE-Era-EngA-EngB-Septin-like GTPase superfamily. EngB GTPase family. Mg(2+) is required as a cofactor.

Functionally, necessary for normal cell division and for the maintenance of normal septation. The sequence is that of Probable GTP-binding protein EngB from Clostridium perfringens (strain SM101 / Type A).